A 252-amino-acid polypeptide reads, in one-letter code: D-aminoacyl-tRNA deacylase (252 aa).

It belongs to the DtdA deacylase family. In terms of assembly, monomer. Zn(2+) is required as a cofactor.

The catalysed reaction is a D-aminoacyl-tRNA + H2O = a tRNA + a D-alpha-amino acid + H(+). It carries out the reaction glycyl-tRNA(Ala) + H2O = tRNA(Ala) + glycine + H(+). Functionally, D-aminoacyl-tRNA deacylase with broad substrate specificity. By recycling D-aminoacyl-tRNA to D-amino acids and free tRNA molecules, this enzyme counteracts the toxicity associated with the formation of D-aminoacyl-tRNA entities in vivo. The polypeptide is D-aminoacyl-tRNA deacylase (Pyrobaculum arsenaticum (strain DSM 13514 / JCM 11321 / PZ6)).